The sequence spans 388 residues: Xylose isomerase (388 aa).

Catalysis depends on residues His54 and Asp57. Glu181, Glu217, His220, Asp245, Asp255, Asp257, and Asp287 together coordinate Mg(2+).

This sequence belongs to the xylose isomerase family. As to quaternary structure, homotetramer. Mg(2+) is required as a cofactor.

It is found in the cytoplasm. The enzyme catalyses alpha-D-xylose = alpha-D-xylulofuranose. In Streptomyces avermitilis (strain ATCC 31267 / DSM 46492 / JCM 5070 / NBRC 14893 / NCIMB 12804 / NRRL 8165 / MA-4680), this protein is Xylose isomerase.